A 153-amino-acid chain; its full sequence is Selenoprotein F (153 aa).

An N-terminal signal peptide occupies residues 1 to 19 (MAGEVYLLWLLPLLQGLAS). A non-standard amino acid (selenocysteine) is located at residue Sec-84.

The protein belongs to the selenoprotein M/F family. Higher levels in polster, prechordal plate, axis, otic vesicle and somites. Lower levels in fin buds.

The protein resides in the endoplasmic reticulum lumen. In terms of biological role, may be involved in redox reactions associated with the formation of disulfide bonds. May contribute to the quality control of protein folding in the endoplasmic reticulum. The protein is Selenoprotein F of Danio rerio (Zebrafish).